Here is a 301-residue protein sequence, read N- to C-terminus: Pantothenate synthetase (301 aa).

30–37 (MGNLHEGH) is an ATP binding site. His-37 functions as the Proton donor in the catalytic mechanism. Gln-61 provides a ligand contact to (R)-pantoate. Gln-61 contributes to the beta-alanine binding site. Position 149–152 (149–152 (GEKD)) interacts with ATP. A (R)-pantoate-binding site is contributed by Gln-155. Residues Val-178 and 186–189 (MSSR) each bind ATP.

Belongs to the pantothenate synthetase family. In terms of assembly, homodimer.

Its subcellular location is the cytoplasm. The enzyme catalyses (R)-pantoate + beta-alanine + ATP = (R)-pantothenate + AMP + diphosphate + H(+). It participates in cofactor biosynthesis; (R)-pantothenate biosynthesis; (R)-pantothenate from (R)-pantoate and beta-alanine: step 1/1. Catalyzes the condensation of pantoate with beta-alanine in an ATP-dependent reaction via a pantoyl-adenylate intermediate. In Vibrio vulnificus (strain YJ016), this protein is Pantothenate synthetase.